The following is a 43-amino-acid chain: Photosystem I reaction center subunit IX (43 aa).

The helical transmembrane segment at 7–27 (YLSVAPVLSALWFGALAGLLI) threads the bilayer.

It belongs to the PsaJ family.

It localises to the plastid. The protein resides in the chloroplast thylakoid membrane. Its function is as follows. May help in the organization of the PsaE and PsaF subunits. This chain is Photosystem I reaction center subunit IX, found in Oenothera argillicola (Appalachian evening primrose).